Reading from the N-terminus, the 314-residue chain is Pantothenate kinase (314 aa).

93–100 (GSVAVGKS) is a binding site for ATP.

It belongs to the prokaryotic pantothenate kinase family.

Its subcellular location is the cytoplasm. It carries out the reaction (R)-pantothenate + ATP = (R)-4'-phosphopantothenate + ADP + H(+). The protein operates within cofactor biosynthesis; coenzyme A biosynthesis; CoA from (R)-pantothenate: step 1/5. This Shewanella denitrificans (strain OS217 / ATCC BAA-1090 / DSM 15013) protein is Pantothenate kinase.